Here is a 448-residue protein sequence, read N- to C-terminus: Rhodopsin (448 aa).

The Extracellular segment spans residues 2–33; it reads GRDLRDNETWWYNPSIVVHPHWREFDQVPDAV. N-linked (GlcNAc...) asparagine glycosylation is present at Asn8. The helical transmembrane segment at 34 to 58 threads the bilayer; sequence YYSLGIFIGICGIIGCGGNGIVIYL. Over 59–70 the chain is Cytoplasmic; that stretch reads FTKTKSLQTPAN. A helical transmembrane segment spans residues 71–97; it reads MFIINLAFSDFTFSLVNGFPLMTISCF. Topologically, residues 98-109 are extracellular; sequence LKKWIFGFAACK. A disulfide bridge connects residues Cys108 and Cys186. Residues 110 to 131 traverse the membrane as a helical segment; sequence VYGFIGGIFGFMSIMTMAMISI. The Cytoplasmic segment spans residues 132-151; it reads DRYNVIGRPMAASKKMSHRR. The chain crosses the membrane as a helical span at residues 152 to 172; it reads AFIMIIFVWLWSVLWAIGPIF. Residues 173-199 lie on the Extracellular side of the membrane; it reads GWGAYTLEGVLCNCSFDYISRDSTTRS. Residues 200–224 form a helical membrane-spanning segment; it reads NILCMFILGFFGPILIIFFCYFNIV. Over 225-261 the chain is Cytoplasmic; sequence MSVSNHEKEMAAMAKRLNAKELRKAQAGANAEMRLAK. Residues 262-283 traverse the membrane as a helical segment; it reads ISIVIVSQFLLSWSPYAVVALL. Over 284–293 the chain is Extracellular; that stretch reads AQFGPLEWVT. The chain crosses the membrane as a helical span at residues 294–315; sequence PYAAQLPVMFAKASAIHNPMIY. Lys305 carries the post-translational modification N6-(retinylidene)lysine. Topologically, residues 316-448 are cytoplasmic; sequence SVSHPKFREA…QGVDNQAYQA (133 aa). 2 S-palmitoyl cysteine lipidation sites follow: Cys336 and Cys337. The segment covering 343–352 has biased composition (acidic residues); that stretch reads ETEDDKDAET. Residues 343-448 form a disordered region; it reads ETEDDKDAET…QGVDNQAYQA (106 aa). Residues 359–391 show a composition bias toward low complexity; it reads SSDAAPSADAAQMKEMMAMMQKMQQQQAAYPPQ. Over residues 392-437 the composition is skewed to pro residues; that stretch reads GYAPPPQGYPPQGYPPQGYPPQGYPPQGYPPPPQGAPPQGAPPAAP.

Belongs to the G-protein coupled receptor 1 family. Opsin subfamily. Post-translationally, contains one covalently linked retinal chromophore. Upon light absorption, the covalently bound 11-cis-retinal is converted to all-trans-retinal. After hydrolysis of the Schiff base and release of the covalently bound all-trans-retinal, active rhodopsin is regenerated by binding of a fresh molecule of 11-cis-retinal. Retina, rhabdomere membrane of photoreceptor cells (at protein level).

It is found in the cell projection. The protein localises to the rhabdomere membrane. Photoreceptor required for image-forming vision at low light intensity. Light-induced isomerization of 11-cis to all-trans retinal triggers a conformational change that activates signaling via G-proteins. Signaling mediates the activation of phospholipase C. Subsequent receptor phosphorylation mediates displacement of the bound G-protein alpha subunit by arrestin and terminates signaling. This Todarodes pacificus (Japanese flying squid) protein is Rhodopsin (RHO).